Consider the following 444-residue polypeptide: N-succinylarginine dihydrolase (444 aa).

Substrate is bound by residues 19-28 (AGLSFGNVAS), Asn110, and 137-138 (HR). Glu174 is a catalytic residue. Arg214 contributes to the substrate binding site. His250 is an active-site residue. Residues Asp252 and Asn362 each coordinate substrate. The active-site Nucleophile is Cys368.

The protein belongs to the succinylarginine dihydrolase family. As to quaternary structure, homodimer.

It carries out the reaction N(2)-succinyl-L-arginine + 2 H2O + 2 H(+) = N(2)-succinyl-L-ornithine + 2 NH4(+) + CO2. It functions in the pathway amino-acid degradation; L-arginine degradation via AST pathway; L-glutamate and succinate from L-arginine: step 2/5. Catalyzes the hydrolysis of N(2)-succinylarginine into N(2)-succinylornithine, ammonia and CO(2). In Shewanella putrefaciens (strain CN-32 / ATCC BAA-453), this protein is N-succinylarginine dihydrolase.